A 139-amino-acid polypeptide reads, in one-letter code: Acidic phospholipase A2 5 (139 aa).

A signal peptide spans 1–16 (MRTLWIVAVWLMGVEG). 7 disulfides stabilise this stretch: C42–C131, C44–C60, C59–C111, C65–C139, C66–C104, C73–C97, and C91–C102. Ca(2+) is bound by residues Y43, G45, and G47. H63 is a catalytic residue. D64 is a binding site for Ca(2+). Residue D105 is part of the active site.

It belongs to the phospholipase A2 family. Group II subfamily. D49 sub-subfamily. Ca(2+) is required as a cofactor. In terms of tissue distribution, expressed by the venom gland.

The protein resides in the secreted. It catalyses the reaction a 1,2-diacyl-sn-glycero-3-phosphocholine + H2O = a 1-acyl-sn-glycero-3-phosphocholine + a fatty acid + H(+). Its function is as follows. PLA2 catalyzes the calcium-dependent hydrolysis of the 2-acyl groups in 3-sn-phosphoglycerides. This Echis pyramidum leakeyi (Leakey's carpet viper) protein is Acidic phospholipase A2 5.